We begin with the raw amino-acid sequence, 439 residues long: Histidine--tRNA ligase (439 aa).

The protein belongs to the class-II aminoacyl-tRNA synthetase family. As to quaternary structure, homodimer.

It localises to the cytoplasm. It carries out the reaction tRNA(His) + L-histidine + ATP = L-histidyl-tRNA(His) + AMP + diphosphate + H(+). The polypeptide is Histidine--tRNA ligase (hisS) (Leptospira interrogans serogroup Icterohaemorrhagiae serovar Lai (strain 56601)).